A 150-amino-acid chain; its full sequence is D-aminoacyl-tRNA deacylase (150 aa).

The short motif at 138–139 (GP) is the Gly-cisPro motif, important for rejection of L-amino acids element.

It belongs to the DTD family. As to quaternary structure, homodimer.

The protein localises to the cytoplasm. It catalyses the reaction glycyl-tRNA(Ala) + H2O = tRNA(Ala) + glycine + H(+). It carries out the reaction a D-aminoacyl-tRNA + H2O = a tRNA + a D-alpha-amino acid + H(+). In terms of biological role, an aminoacyl-tRNA editing enzyme that deacylates mischarged D-aminoacyl-tRNAs. Also deacylates mischarged glycyl-tRNA(Ala), protecting cells against glycine mischarging by AlaRS. Acts via tRNA-based rather than protein-based catalysis; rejects L-amino acids rather than detecting D-amino acids in the active site. By recycling D-aminoacyl-tRNA to D-amino acids and free tRNA molecules, this enzyme counteracts the toxicity associated with the formation of D-aminoacyl-tRNA entities in vivo and helps enforce protein L-homochirality. The polypeptide is D-aminoacyl-tRNA deacylase (Natranaerobius thermophilus (strain ATCC BAA-1301 / DSM 18059 / JW/NM-WN-LF)).